The chain runs to 20 residues: Phosphoglycerate kinase (20 aa).

The segment at 1 to 20 (MNKKSIRNVNLKGKRVFDRV) is disordered.

The protein belongs to the phosphoglycerate kinase family. In terms of assembly, monomer.

The protein localises to the cytoplasm. It carries out the reaction (2R)-3-phosphoglycerate + ATP = (2R)-3-phospho-glyceroyl phosphate + ADP. It functions in the pathway carbohydrate degradation; glycolysis; pyruvate from D-glyceraldehyde 3-phosphate: step 2/5. The polypeptide is Phosphoglycerate kinase (Bacillus cereus).